A 1663-amino-acid polypeptide reads, in one-letter code: Complement C3 (1663 aa).

Positions 1 to 22 are cleaved as a signal peptide; it reads MGPTSGPSLLLLLLTHLPLALG. Phosphoserine; by FAM20C occurs at positions 38 and 70. A glycan (N-linked (GlcNAc...) asparagine) is linked at asparagine 85. Residues serine 297 and serine 303 each carry the phosphoserine; by FAM20C modification. 13 disulfides stabilise this stretch: cysteine 559-cysteine 816, cysteine 627-cysteine 662, cysteine 693-cysteine 720, cysteine 694-cysteine 727, cysteine 707-cysteine 728, cysteine 873-cysteine 1513, cysteine 1101-cysteine 1158, cysteine 1358-cysteine 1489, cysteine 1389-cysteine 1458, cysteine 1506-cysteine 1511, cysteine 1518-cysteine 1590, cysteine 1537-cysteine 1661, and cysteine 1637-cysteine 1646. A Phosphoserine; by FAM20C modification is found at serine 672. One can recognise an Anaphylatoxin-like domain in the interval 693-728; it reads CCEDGMRENPMRFSCQRRTRFISLGEACKKVFLDCC. Asparagine 939 is a glycosylation site (N-linked (GlcNAc...) asparagine). The disordered stretch occupies residues 954–973; that stretch reads REGVQKEDIPPADLSDQVPD. Serine 968 carries the post-translational modification Phosphoserine; by FAM20C. Positions 1010 to 1013 form a cross-link, isoglutamyl cysteine thioester (Cys-Gln); that stretch reads CGEQ. The residue at position 1321 (serine 1321) is a Phosphoserine; by FAM20C. The NTR domain maps to 1518–1661; sequence CFIQKSDDKV…FTESMVVFGC (144 aa). Phosphoserine; by FAM20C is present on serine 1573. An N-linked (GlcNAc...) asparagine glycan is attached at asparagine 1617. The tract at residues 1634-1659 is interaction with CFP/properdin; the sequence is EDECQDEENQKQCQDLGAFTESMVVF.

As to quaternary structure, in absence of complement activation, the C3 precursor is first processed by the removal of 4 Arg residues, forming two chains, beta and alpha, linked by a disulfide bond. In terms of assembly, complement C3b is composed of complement C3b and complement C3 beta chains that are associated via disulfide bonds. Non-enzymatic component of the C5 convertase, also named C4bC2bC3b, composed of the serine protease complement C2b (C2), complement C3b, as well as complement C4b (C4). Non-enzymatic component of the C5 convertase of the alternative complement pathways composed of the serine protease complement CFB and complement C3b. Interacts with CFP; interaction takes place together with CFB in the alternative complement system and allows the complex to become active. Interacts with CR1 (via Sushi 8 and Sushi 9 domains). Interacts with CFH. Interacts with CFH. Interacts with CR2. As to quaternary structure, during pregnancy, C3dg exists as a complex (probably a 2:2:2 heterohexamer) with AGT and the proform of PRG2. Interacts with CR2 (via the N-terminal Sushi domains 1 and 2). In terms of assembly, (Microbial infection) C3b interacts with herpes simplex virus 1 (HHV-1) and herpes simplex virus 2 (HHV-2) envelope glycoprotein C; this interaction inhibits the activation of the complement system. (Microbial infection) Interacts with Staphylococcus aureus immunoglobulin-binding protein Sbi; this interaction prevents the association between C3dg and CR2. As to quaternary structure, (Microbial infection) Interacts with Staphylococcus aureus protein Fib. In terms of processing, C3 precursor is first processed by the removal of 4 Arg residues, forming two chains, beta and alpha, linked by a disulfide bond. During activation of the complement systems, the alpha chain is cleaved into C3a and C3b by the C3 convertase: C3b stays linked to the beta chain, while C3a is released in the plasma. The alpha chain is cleaved by the serine protease complement C2b component of the C3 convertase to generate C3a and C3b following activation by the classical, lectin and GZMK complement systems. The alpha chain is cleaved by CFB component of the C3 convertase to generate C3a and C3b following activation by the alternative complement system. Post-translationally, C3a is further processed by carboxypeptidases to release the C-terminal arginine residue generating the acylation stimulating protein (ASP). Levels of ASP are increased in adipocytes in the postprandial period and by insulin and dietary chylomicrons. Complement C3b is rapidly split in two positions by factor I (CFI) and a cofactor (CFH) to form iC3b (inactivated C3b) and C3f which is released. CFI and CFH catalyze proteolytic degradation of already-deposited complement C3b. Then iC3b is slowly cleaved (possibly by CFI) to form C3c (beta chain + alpha' chain fragment 1 + alpha' chain fragment 2), C3dg and C3f. Other proteases produce other fragments such as C3d or C3g. In terms of processing, upon activation, the internal thioester bond reacts with carbohydrate antigens on the target surface to form amide or ester bonds, leading to covalent association with the surface of pathogens. Post-translationally, complement C3b interacts with complement C4b via a thioester linkage. Phosphorylated by FAM20C in the extracellular medium. In terms of processing, (Microbial infection) C3 is cleaved by Staphylococcus aureus aureolysin; this cleavage renders C3a and C3b inactive. C3b is rapidly degraded by host factors CFH and CFI preventing its deposition on the bacterial surface while C3a is further inactivated by aureolysin. Post-translationally, (Microbial infection) Complement C3 beta chain is cleaved and inactivated by S.pyogenes SpeB. (Microbial infection) Cleaved by N.meningitidis NalP between Leu-744 and Gly-745, generating a slightly shorter C3 alpha form and a slightly longer C3 beta form. The C3b-like fragment is degraded in the presence of the complement regulators CFH and CFI, preventing its deposition on the bacterial surface. Plasma. As to expression, produced in adipocytes and released into the plasma during both the fasting and postprandial periods.

It is found in the secreted. Its subcellular location is the cell surface. Complement activation is inhibited by VSIG4. Its function is as follows. Precursor of non-enzymatic components of the classical, alternative, lectin and GZMK complement pathways, which consist in a cascade of proteins that leads to phagocytosis and breakdown of pathogens and signaling that strengthens the adaptive immune system. Functionally, non-enzymatic component of C5 convertase. Generated following cleavage by C3 convertase, it covalently attaches to the surface of pathogens, where it acts as an opsonin that marks the surface of antigens for removal. Complement C3b binds covalently via its reactive thioester, to cell surface carbohydrates or immune aggregates. Together with complement C4b, it then recruits the serine protease complement C2b to form the C5 convertase, which cleaves and activate C5, the next component of the complement pathways. In the alternative complement pathway, recruits the serine protease CFB to form the C5 convertase that cleaves and activates C5. Mediator of local inflammatory process released following cleavage by C3 convertase. Acts by binding to its receptor, C3AR1, activating G protein-coupled receptor signaling, promoting the phosphorylation, ARRB2-mediated internalization and endocytosis of C3AR1. C3a anaphylatoxin stimulates the activation of immune cells such as mast cells and basophilic leukocytes to release inflammation agents, such as cytokines, chemokines and histamine, which promote inflammation development. Also acts as potent chemoattractant for the migration of macrophages and neutrophils to the inflamed tissues, resulting in neutralization of the inflammatory triggers by multiple ways, such as phagocytosis and generation of reactive oxidants. In terms of biological role, adipogenic hormone that stimulates triglyceride synthesis and glucose transport in adipocytes, regulating fat storage and playing a role in postprandial triglyceride clearance. Appears to stimulate triglyceride synthesis via activation of the PLC, MAPK and AKT signaling pathways. Acts by binding to its receptor, C5AR2, activating G protein-coupled receptor signaling, promoting the phosphorylation, ARRB2-mediated internalization and endocytosis of C5AR2. Its function is as follows. Acts as a chemoattractant for neutrophils in chronic inflammation. The polypeptide is Complement C3 (Homo sapiens (Human)).